A 282-amino-acid polypeptide reads, in one-letter code: ATP synthase gamma chain (282 aa).

This sequence belongs to the ATPase gamma chain family. In terms of assembly, F-type ATPases have 2 components, CF(1) - the catalytic core - and CF(0) - the membrane proton channel. CF(1) has five subunits: alpha(3), beta(3), gamma(1), delta(1), epsilon(1). CF(0) has three main subunits: a, b and c.

The protein resides in the cell inner membrane. In terms of biological role, produces ATP from ADP in the presence of a proton gradient across the membrane. The gamma chain is believed to be important in regulating ATPase activity and the flow of protons through the CF(0) complex. This chain is ATP synthase gamma chain, found in Fusobacterium nucleatum subsp. nucleatum (strain ATCC 25586 / DSM 15643 / BCRC 10681 / CIP 101130 / JCM 8532 / KCTC 2640 / LMG 13131 / VPI 4355).